A 105-amino-acid chain; its full sequence is Large ribosomal subunit protein uL24 (105 aa).

This sequence belongs to the universal ribosomal protein uL24 family. As to quaternary structure, part of the 50S ribosomal subunit.

One of two assembly initiator proteins, it binds directly to the 5'-end of the 23S rRNA, where it nucleates assembly of the 50S subunit. In terms of biological role, one of the proteins that surrounds the polypeptide exit tunnel on the outside of the subunit. This is Large ribosomal subunit protein uL24 from Xanthomonas campestris pv. campestris (strain 8004).